The following is an 81-amino-acid chain: Type III secretion regulatory protein ExsE (81 aa).

The segment at 55–81 (DPRSEQALQRLADGDGTPLEARTVRRR) is disordered.

As to quaternary structure, interacts with ExsC.

It is found in the cytoplasm. The protein localises to the secreted. Acts as a negative regulator of the type III secretion regulon (T3SS) expression. In the absence of inducing signals such as low Ca(2+) or host cell contact, the T3SS/injectisome is expressed at a low basal level and exists in a quiescent state due to ExsA sequestration by ExsD. ExsE binding to ExsC disrupts the complex between ExsC and ExsD, thereby allowing free ExsD to bind ExsA. Upon inducing signal, ExsE is secreted allowing ExsC to bind ExsD. In turn, ExsD cannot bind ExsA and prevent ExsA-mediated transcriptional activation of the type III secretion system. The polypeptide is Type III secretion regulatory protein ExsE (exsE) (Pseudomonas aeruginosa (strain ATCC 15692 / DSM 22644 / CIP 104116 / JCM 14847 / LMG 12228 / 1C / PRS 101 / PAO1)).